A 161-amino-acid chain; its full sequence is UPF0262 protein Rru_A2770 (161 aa).

This sequence belongs to the UPF0262 family.

This chain is UPF0262 protein Rru_A2770, found in Rhodospirillum rubrum (strain ATCC 11170 / ATH 1.1.1 / DSM 467 / LMG 4362 / NCIMB 8255 / S1).